A 72-amino-acid polypeptide reads, in one-letter code: Disintegrin basilicin (72 aa).

A Disintegrin domain is found at 1–72 (AGEECDCGSP…ADCPRNHFHA (72 aa)). Disulfide bonds link cysteine 5-cysteine 20, cysteine 7-cysteine 15, cysteine 14-cysteine 37, cysteine 28-cysteine 34, cysteine 33-cysteine 58, and cysteine 46-cysteine 65. Residues 50 to 52 (RGD) carry the Cell attachment site motif.

It belongs to the venom metalloproteinase (M12B) family. P-II subfamily. P-IIa sub-subfamily. As to quaternary structure, monomer (disintegrin). In terms of tissue distribution, expressed by the venom gland.

It localises to the secreted. Inhibits fibrinogen interaction with platelets. Acts by binding to alpha-IIb/beta-3 (ITGA2B/ITGB3) on the platelet surface and inhibits aggregation induced by ADP, thrombin, platelet-activating factor and collagen. This Crotalus basiliscus (Mexican west-coast rattlesnake) protein is Disintegrin basilicin.